A 251-amino-acid polypeptide reads, in one-letter code: Intermembrane phospholipid transport system lipoprotein MlaA (251 aa).

The signal sequence occupies residues 1–17; sequence MKLRLSALALGTTLLVG. Cys18 is lipidated: N-palmitoyl cysteine. A lipid anchor (S-diacylglycerol cysteine) is attached at Cys18. Positions 228 to 251 are disordered; that stretch reads GELKPQENPNAQAIQDDLKDIDSE.

It belongs to the MlaA family.

It is found in the cell outer membrane. Involved in a phospholipid transport pathway that maintains lipid asymmetry in the outer membrane by retrograde trafficking of phospholipids from the outer membrane to the inner membrane. Required for intercellular spreading of S.flexneri. The polypeptide is Intermembrane phospholipid transport system lipoprotein MlaA (Shigella flexneri).